Here is a 130-residue protein sequence, read N- to C-terminus: Small ribosomal subunit protein uS9 (130 aa).

Belongs to the universal ribosomal protein uS9 family.

This Pseudomonas paraeruginosa (strain DSM 24068 / PA7) (Pseudomonas aeruginosa (strain PA7)) protein is Small ribosomal subunit protein uS9.